The primary structure comprises 331 residues: Lipoyl synthase (331 aa).

Residues cysteine 57, cysteine 62, cysteine 68, cysteine 83, cysteine 87, cysteine 90, and serine 294 each coordinate [4Fe-4S] cluster. In terms of domain architecture, Radical SAM core spans tryptophan 69 to leucine 283.

This sequence belongs to the radical SAM superfamily. Lipoyl synthase family. It depends on [4Fe-4S] cluster as a cofactor.

It localises to the cytoplasm. It catalyses the reaction [[Fe-S] cluster scaffold protein carrying a second [4Fe-4S](2+) cluster] + N(6)-octanoyl-L-lysyl-[protein] + 2 oxidized [2Fe-2S]-[ferredoxin] + 2 S-adenosyl-L-methionine + 4 H(+) = [[Fe-S] cluster scaffold protein] + N(6)-[(R)-dihydrolipoyl]-L-lysyl-[protein] + 4 Fe(3+) + 2 hydrogen sulfide + 2 5'-deoxyadenosine + 2 L-methionine + 2 reduced [2Fe-2S]-[ferredoxin]. It participates in protein modification; protein lipoylation via endogenous pathway; protein N(6)-(lipoyl)lysine from octanoyl-[acyl-carrier-protein]: step 2/2. In terms of biological role, catalyzes the radical-mediated insertion of two sulfur atoms into the C-6 and C-8 positions of the octanoyl moiety bound to the lipoyl domains of lipoate-dependent enzymes, thereby converting the octanoylated domains into lipoylated derivatives. The protein is Lipoyl synthase of Clavibacter michiganensis subsp. michiganensis (strain NCPPB 382).